The following is a 210-amino-acid chain: MFESFNVPGLYIAVQAVLALAASWTSRQVGERTLTGIVIDSGDGVTHVIPVAEGYVIGSCIKHIPIAGRDITYFIQQLLREREVGIPPEQSLETAKAIKEKYCYICPDIVKEFAKYDVDPQKWIKQYTGINAINQKKFVIDVGYERFLGPEIFFHPEFANPDSMESISDVVDEVIQNCPIDVRRPLYKMEQIPLSYPQGHGFHPLSPPFH.

The signal sequence occupies residues 1–21 (MFESFNVPGLYIAVQAVLALA).

This sequence belongs to the actin family. In terms of tissue distribution, expressed in kidney, stomach, spleen, bone marrow, uterus, testis, placenta, skeletal muscle, mammary gland, lung, fetal liver, and fetal kidney, but not detected in small intestine, brain, and thymus. Expressed in low-metastatic lung adenocarcinoma cells but not in high-metastatic ones.

In terms of biological role, may play a role in the suppression of metastatic potential in lung adenoma carcinoma cells. The sequence is that of Actin-related protein 3C (ACTR3C) from Homo sapiens (Human).